The primary structure comprises 470 residues: E3 ubiquitin-protein ligase TRAIP (470 aa).

The RING-type; atypical zinc finger occupies 7–50 (CTICSDFFDHSRDVAAIHCGHTFHLQCLIQWFETAPSRTCPQCR). A coiled-coil region spans residues 76 to 277 (AEFLKNELDS…RKKLMILQGT (202 aa)). The interval 211 to 470 (LKEARKATGE…QPKLDTFLCQ (260 aa)) is interaction with CYLD. A PIP-box motif is present at residues 461–470 (QPKLDTFLCQ).

It belongs to the TRAIP family. Interacts (via PIP-box) with PCNA. Binds TRAF1, TRAF2, TRAF3, TRAF5 and TRAF6 is part of the receptor-TRAF signaling complex. May interact with CYLD; the C-terminus interacts with CYLD, however the interaction was not detected with the full-length protein. Interacts with POLK and POLN. Interacts with UIMC1. In terms of processing, autoubiquitinated. Sumoylated; sumoylation is required for nuclear localization. Sumoylation increases protein stability, possibly by preventing ubiquitination. In terms of tissue distribution, detected in testis and thymus, and at lower levels in spleen.

Its subcellular location is the nucleus. The protein resides in the nucleoplasm. It is found in the nucleolus. It localises to the chromosome. The protein localises to the cytoplasm. Its subcellular location is the perinuclear region. The enzyme catalyses S-ubiquitinyl-[E2 ubiquitin-conjugating enzyme]-L-cysteine + [acceptor protein]-L-lysine = [E2 ubiquitin-conjugating enzyme]-L-cysteine + N(6)-ubiquitinyl-[acceptor protein]-L-lysine.. Its pathway is protein modification; protein ubiquitination. In terms of biological role, E3 ubiquitin ligase required to protect genome stability in response to replication stress. Acts as a key regulator of interstrand cross-link repair, which takes place when both strands of duplex DNA are covalently tethered together, thereby blocking replication and transcription. During mitosis, controls the choice between the two pathways of replication-coupled interstrand-cross-link repair by mediating ubiquitination of MCM7 subunit of the CMG helicase complex. Short ubiquitin chains on MCM7 promote recruitment of DNA glycosylase NEIL3. If the interstrand cross-link cannot be cleaved by NEIL3, the ubiquitin chains continue to grow on MCM7, promoting the unloading of the CMG helicase complex by the VCP/p97 ATPase, enabling the Fanconi anemia DNA repair pathway. Only catalyzes ubiquitination of MCM7 when forks converge. Also involved in the repair of covalent DNA-protein cross-links (DPCs) during DNA synthesis: promotes ubiquitination of DPCs, leading to their degradation by the proteasome. Has also been proposed to play a role in promoting translesion synthesis by mediating the assembly of 'Lys-63'-linked poly-ubiquitin chains on the Y-family polymerase POLN in order to facilitate bypass of DNA lesions and preserve genomic integrity. The function in translesion synthesis is however controversial. Acts as a regulator of the spindle assembly checkpoint. Also acts as a negative regulator of innate immune signaling by inhibiting activation of NF-kappa-B mediated by TNF. Negatively regulates TLR3/4- and RIG-I-mediated IRF3 activation and subsequent IFNB1 production and cellular antiviral response by promoting 'Lys-48'-linked polyubiquitination of TNK1 leading to its proteasomal degradation. This Mus musculus (Mouse) protein is E3 ubiquitin-protein ligase TRAIP.